Here is an 864-residue protein sequence, read N- to C-terminus: Nitrate reductase [NADH] (864 aa).

Residue cysteine 139 coordinates Mo-molybdopterin. The Cytochrome b5 heme-binding domain occupies 497–572 (PRQYTMEEVA…LAQYYIGDLV (76 aa)). Positions 532 and 555 each coordinate heme. Residues 606–718 (RQKVKLPLIE…KGPLGHFVYD (113 aa)) form the FAD-binding FR-type domain. FAD is bound by residues 658–661 (RAYT), 675–679 (LIKVY), phenylalanine 680, phenylalanine 687, 692–694 (KMS), and threonine 746.

This sequence belongs to the nitrate reductase family. As to quaternary structure, homodimer. The cofactor is FAD. It depends on heme as a cofactor. Mo-molybdopterin is required as a cofactor.

The catalysed reaction is nitrite + NAD(+) + H2O = nitrate + NADH + H(+). Functionally, nitrate reductase is a key enzyme involved in the first step of nitrate assimilation in plants, fungi and bacteria. The polypeptide is Nitrate reductase [NADH] (NITA) (Volvox carteri (Green alga)).